Consider the following 123-residue polypeptide: Histone H2B (123 aa).

The tract at residues 1–31 (MPPKVASKGAKKAASKAKAARSGEKKKKRRR) is disordered. Residues 9-31 (GAKKAASKAKAARSGEKKKKRRR) show a composition bias toward basic residues. An O-linked (GlcNAc) serine glycan is attached at Ser-110. A Glycyl lysine isopeptide (Lys-Gly) (interchain with G-Cter in ubiquitin) cross-link involves residue Lys-118.

It belongs to the histone H2B family. As to quaternary structure, the nucleosome is a histone octamer containing two molecules each of H2A, H2B, H3 and H4 assembled in one H3-H4 heterotetramer and two H2A-H2B heterodimers. The octamer wraps approximately 147 bp of DNA. In terms of processing, monoubiquitination of Lys-118 gives a specific tag for epigenetic transcriptional activation and is also prerequisite for histone H3 'Lys-4' and 'Lys-79' methylation. GlcNAcylation at Ser-110 promotes monoubiquitination of Lys-118. It fluctuates in response to extracellular glucose, and associates with transcribed genes.

Its subcellular location is the nucleus. It is found in the chromosome. Core component of nucleosome. Nucleosomes wrap and compact DNA into chromatin, limiting DNA accessibility to the cellular machineries which require DNA as a template. Histones thereby play a central role in transcription regulation, DNA repair, DNA replication and chromosomal stability. DNA accessibility is regulated via a complex set of post-translational modifications of histones, also called histone code, and nucleosome remodeling. This chain is Histone H2B, found in Platynereis dumerilii (Dumeril's clam worm).